Reading from the N-terminus, the 99-residue chain is UPF0213 protein RBAM_000440 (99 aa).

One can recognise a GIY-YIG domain in the interval 4-79 (NSHFFYVLLC…KQLTRKKKEQ (76 aa)).

Belongs to the UPF0213 family.

This Bacillus velezensis (strain DSM 23117 / BGSC 10A6 / LMG 26770 / FZB42) (Bacillus amyloliquefaciens subsp. plantarum) protein is UPF0213 protein RBAM_000440.